A 372-amino-acid chain; its full sequence is 4-hydroxy-3-methylbut-2-en-1-yl diphosphate synthase (flavodoxin) (372 aa).

Residues cysteine 270, cysteine 273, cysteine 305, and glutamate 312 each contribute to the [4Fe-4S] cluster site.

Belongs to the IspG family. It depends on [4Fe-4S] cluster as a cofactor.

It carries out the reaction (2E)-4-hydroxy-3-methylbut-2-enyl diphosphate + oxidized [flavodoxin] + H2O + 2 H(+) = 2-C-methyl-D-erythritol 2,4-cyclic diphosphate + reduced [flavodoxin]. The protein operates within isoprenoid biosynthesis; isopentenyl diphosphate biosynthesis via DXP pathway; isopentenyl diphosphate from 1-deoxy-D-xylulose 5-phosphate: step 5/6. Functionally, converts 2C-methyl-D-erythritol 2,4-cyclodiphosphate (ME-2,4cPP) into 1-hydroxy-2-methyl-2-(E)-butenyl 4-diphosphate. This Vibrio parahaemolyticus serotype O3:K6 (strain RIMD 2210633) protein is 4-hydroxy-3-methylbut-2-en-1-yl diphosphate synthase (flavodoxin).